The sequence spans 155 residues: Microsomal glutathione S-transferase 1 (155 aa).

Residues Asp3 to Asp9 lie on the Lumenal side of the membrane. The chain crosses the membrane as a helical span at residues Asn10 to Ala33. Residues Thr34–Phe62 lie on the Cytoplasmic side of the membrane. Position 38 (Arg38) interacts with glutathione. Residues Lys42, Lys55, and Lys60 each carry the N6-acetyllysine modification. Residues Val63–Ser96 traverse the membrane as a helical segment. Positions 73, 74, 76, and 81 each coordinate glutathione. At Gly97–Asp99 the chain is on the lumenal side. Residues Leu100 to Thr123 traverse the membrane as a helical segment. Tyr121 serves as a coordination point for glutathione. The Cytoplasmic portion of the chain corresponds to Pro124 to Pro128. The helical transmembrane segment at Asn129–Leu148 threads the bilayer. At Leu149–Leu155 the chain is on the lumenal side.

This sequence belongs to the MAPEG family. As to quaternary structure, homotrimer; The trimer binds only one molecule of glutathione. In terms of processing, acetylation of Lys-42 and Lys-55 is observed in liver mitochondria from fasted mice but not from fed mice. In terms of tissue distribution, expressed in the testes (at protein level).

Its subcellular location is the endoplasmic reticulum membrane. It is found in the mitochondrion outer membrane. The catalysed reaction is RX + glutathione = an S-substituted glutathione + a halide anion + H(+). Conjugation of reduced glutathione to a wide number of exogenous and endogenous hydrophobic electrophiles. This Mus musculus (Mouse) protein is Microsomal glutathione S-transferase 1 (Mgst1).